The sequence spans 191 residues: ECF RNA polymerase sigma-E factor (191 aa).

A binds RNAP core region spans residues methionine 1–glycine 153. A sigma-70 factor domain-2 region spans residues leucine 25–arginine 92. The short motif at aspartate 48–leucine 61 is the Polymerase core binding element. Positions glutamine 129–alanine 180 are sigma-70 factor domain-4. Positions tyrosine 156 to phenylalanine 175 form a DNA-binding region, H-T-H motif.

Belongs to the sigma-70 factor family. ECF subfamily. In terms of assembly, interacts transiently with the RNAP catalytic core formed by RpoA, RpoB, RpoC and RpoZ (2 alpha, 1 beta, 1 beta' and 1 omega subunit) to form the RNAP holoenzyme that can initiate transcription. Interacts 1:1 with anti-sigma-E factor RseA which prevents binding to RNAP catalytic core.

The protein resides in the cytoplasm. With respect to regulation, ECF sigma-E is held in an inactive form by its cognate anti-sigma factor (RseA) until released by regulated intramembrane proteolysis (RIP). RIP occurs when an extracytoplasmic signal (periplasmic, acid or heat stress) triggers a concerted proteolytic cascade to transmit information and elicit cellular responses. In S.typhimurium there are 2 cascades, the heat shock response which depends on DegS and RseP, and acid response which depends only on RseP. The anti-sigma factor RseA is an inner membrane protein, binding sigma-E in the cytoplasm and RseB in the periplasm. RseA is first cut extracytoplasmically (site-1 protease, S1P, by DegS), then within the membrane itself (site-2 protease, S2P, by RseP), while cytoplasmic proteases (predominantly ClpX-ClpP) finish degrading the regulatory protein, liberating sigma-E. Degradation of RseA requires 2 signals to activate DegS; an outer membrane protein (OMP) signal activates DegS, while an LPS signal causes release of RseB from RseA, freeing RseA to be cleaved. OMP stress can be abrogated by overexpression of the sRNA rybB. Sigma factors are initiation factors that promote the attachment of RNA polymerase (RNAP) to specific initiation sites and are then released. Extracytoplasmic function (ECF) sigma-E controls the envelope stress response, responding to periplasmic protein stress, increased levels of periplasmic lipopolysaccharide (LPS) as well as acid stress, heat shock and oxidative stress; it controls protein processing in the extracytoplasmic compartment. The protein is ECF RNA polymerase sigma-E factor (rpoE) of Salmonella typhimurium (strain 14028s / SGSC 2262).